Consider the following 550-residue polypeptide: Arginine--tRNA ligase (550 aa).

The short motif at 130 to 140 (ANPTGPIHLGG) is the 'HIGH' region element.

Belongs to the class-I aminoacyl-tRNA synthetase family. In terms of assembly, monomer.

Its subcellular location is the cytoplasm. It catalyses the reaction tRNA(Arg) + L-arginine + ATP = L-arginyl-tRNA(Arg) + AMP + diphosphate. This is Arginine--tRNA ligase from Corynebacterium diphtheriae (strain ATCC 700971 / NCTC 13129 / Biotype gravis).